Here is a 379-residue protein sequence, read N- to C-terminus: Alcohol dehydrogenase class-P (379 aa).

At S2 the chain carries N-acetylserine. C47 is a Zn(2+) binding site. T49 serves as a coordination point for an alcohol. An NAD(+)-binding site is contributed by T49. D50, H69, E70, C99, C102, C105, C113, and C177 together coordinate Zn(2+). Position 69 (H69) interacts with an alcohol. NAD(+) is bound by residues V206 and D226. S229 is modified (phosphoserine). Residues R231, T272, V295, V297, T320, F322, and R372 each coordinate NAD(+).

This sequence belongs to the zinc-containing alcohol dehydrogenase family. Class-P subfamily. Homodimer. The cofactor is Zn(2+). Post-translationally, glutathionylated. In terms of tissue distribution, root specific. Also detected in etiolated seedlings and leaves in cold conditions.

It localises to the cytoplasm. The enzyme catalyses a primary alcohol + NAD(+) = an aldehyde + NADH + H(+). It carries out the reaction a secondary alcohol + NAD(+) = a ketone + NADH + H(+). The catalysed reaction is ethanol + NAD(+) = acetaldehyde + NADH + H(+). Its activity is regulated as follows. Alcohol dehydrogenase activity show inverse correlation with the decreasing availability of oxygen. Slightly repressed by thiol-modifying agents N-ethylmaleimide (NEM) and 5,5-dithio-bis-(2-nitrobenzoic acid) (DTNB), as well as by methyl methanethiosulfonate (MMTS) in a dose-dependent manner. Inhibited by hydrogen peroxide H(2)O(2). Functionally, alcohol dehydrogenase catalyzing the reduction of toxic aldehydes to the corresponding alcohols. Mostly active on ethanol (EtOH), but exhibits broad substrate selectivity for primary and secondary alcohols (e.g. cinnamyl alcohol, octanol, geraniol, butanol, propyl alcohol, pentanol, isopentanol, ethylene glycol, isopropanol, methanol and tertiary butyl alcohol). Also catalyzes the reverse reaction to convert allyl alcohol to highly toxic acryl-aldehyde. Required for survival and acclimation in hypoxic conditions, especially in roots. Not able to catalyze NADH-dependent degradation of S-nitrosoglutathione (GSNO). In Arabidopsis thaliana (Mouse-ear cress), this protein is Alcohol dehydrogenase class-P.